A 219-amino-acid chain; its full sequence is 7-carboxy-7-deazaguanine synthase (219 aa).

Residues 12–14 and arginine 27 contribute to the substrate site; that span reads IQG. One can recognise a Radical SAM core domain in the interval 18 to 219; it reads YTGTPSIFIR…VQIHKYLKIR (202 aa). [4Fe-4S] cluster contacts are provided by cysteine 31, cysteine 35, and cysteine 38. Mg(2+) is bound at residue threonine 40. Threonine 92 contacts substrate. Residues glycine 94 and 136 to 138 each bind S-adenosyl-L-methionine; that span reads SPK.

The protein belongs to the radical SAM superfamily. 7-carboxy-7-deazaguanine synthase family. As to quaternary structure, homodimer. It depends on [4Fe-4S] cluster as a cofactor. Requires S-adenosyl-L-methionine as cofactor. Mg(2+) is required as a cofactor.

It carries out the reaction 6-carboxy-5,6,7,8-tetrahydropterin + H(+) = 7-carboxy-7-deazaguanine + NH4(+). It functions in the pathway purine metabolism; 7-cyano-7-deazaguanine biosynthesis. Catalyzes the complex heterocyclic radical-mediated conversion of 6-carboxy-5,6,7,8-tetrahydropterin (CPH4) to 7-carboxy-7-deazaguanine (CDG), a step common to the biosynthetic pathways of all 7-deazapurine-containing compounds. In Buchnera aphidicola subsp. Schizaphis graminum (strain Sg), this protein is 7-carboxy-7-deazaguanine synthase.